The primary structure comprises 859 residues: Homeobox-leucine zipper protein HOX32 (859 aa).

Residues 7–31 (AAVHGVGRQDRSSPGGGGAPQVDTG) are disordered. Residues 29–92 (DTGKYVRYTP…NRRCREKQRK (64 aa)) constitute a DNA-binding region (homeobox). Residues 100–129 (VNRKLTAMNKLLMEENDRLQKQVSRLVYEN) adopt a coiled-coil conformation. Residues 146 to 164 (TSCESVVTSGQHHQQQNPA) show a composition bias toward polar residues. Positions 146-172 (TSCESVVTSGQHHQQQNPAATRPQRDA) are disordered. Positions 171–393 (DANNPAGLLA…LRHIRQIAHE (223 aa)) constitute an START domain.

It belongs to the HD-ZIP homeobox family. Class III subfamily. In terms of tissue distribution, expressed in seedlings, roots, stems, leaf sheaths and blades and panicles.

The protein localises to the nucleus. Probable transcription factor. The chain is Homeobox-leucine zipper protein HOX32 (HOX32) from Oryza sativa subsp. japonica (Rice).